Consider the following 817-residue polypeptide: MAGVSAVSKVSSLVCDLSSTSGLIRRTANPHPNVWGYDLVHSLKSPYIDSSYRERAEVLVSEIKAMLNPAITGDGESMITPSAYDTAWVARVPAIDGSARPQFPQTVDWILKNQLKDGSWGIQSHFLLSDRLLATLSCVLVLLKWNVGDLQVEQGIEFIKSNLELVKDETDQDSLVTDFEIIFPSLLREAQSLRLGLPYDLPYIHLLQTKRQERLAKLSREEIYAVPSPLLYSLEGIQDIVEWERIMEVQSQDGSFLSSPASTACVFMHTGDAKCLEFLNSVMIKFGNFVPCLYPVDLLERLLIVDNIVRLGIYRHFEKEIKEALDYVYRHWNERGIGWGRLNPIADLETTALGFRLLRLHRYNVSPAIFDNFKDANGKFICSTGQFNKDVASMLNLYRASQLAFPGENILDEAKSFATKYLREALEKSETSSAWNNKQNLSQEIKYALKTSWHASVPRVEAKRYCQVYRPDYARIAKCVYKLPYVNNEKFLELGKLDFNIIQSIHQEEMKNVTSWFRDSGLPLFTFARERPLEFYFLVAAGTYEPQYAKCRFLFTKVACLQTVLDDMYDTYGTLDELKLFTEAVRRWDLSFTENLPDYMKLCYQIYYDIVHEVAWEAEKEQGRELVSFFRKGWEDYLLGYYEEAEWLAAEYVPTLDEYIKNGITSIGQRILLLSGVLIMDGQLLSQEALEKVDYPGRRVLTELNSLISRLADDTKTYKAEKARGELASSIECYMKDHPECTEEEALDHIYSILEPAVKELTREFLKPDDVPFACKKMLFEETRVTMVIFKDGDGFGVSKLEVKDHIKECLIEPLPL.

Residues D566, D570, D713, T717, and E721 each contribute to the Mg(2+) site. The short motif at D566–D570 is the DDXXD motif element.

It belongs to the terpene synthase family. Tpsd subfamily. It depends on Mg(2+) as a cofactor. The cofactor is Mn(2+). K(+) is required as a cofactor.

The protein localises to the cytoplasm. It carries out the reaction (2E,6E)-farnesyl diphosphate = (E,R)-alpha-bisabolene + diphosphate. Its pathway is terpene metabolism; oleoresin biosynthesis. Converts farnesyl diphosphate to alpha-bisabolene. Involved in defensive oleoresin formation in conifers in response to insect attack or other injury. Involved in sesquiterpene (C15) olefins biosynthesis. The polypeptide is Alpha-bisabolene synthase (ag1) (Abies grandis (Grand fir)).